The chain runs to 207 residues: Thymidylate kinase (207 aa).

ATP is bound at residue 10–17; that stretch reads GIEGSGKS.

Belongs to the thymidylate kinase family.

The enzyme catalyses dTMP + ATP = dTDP + ADP. Its function is as follows. Phosphorylation of dTMP to form dTDP in both de novo and salvage pathways of dTTP synthesis. This is Thymidylate kinase from Halothermothrix orenii (strain H 168 / OCM 544 / DSM 9562).